The primary structure comprises 399 residues: Argininosuccinate synthase (399 aa).

An ATP-binding site is contributed by 8–16; sequence AYSGGLDTS. Tyrosine 87 contributes to the L-citrulline binding site. Position 117 (glycine 117) interacts with ATP. The L-aspartate site is built by threonine 119, asparagine 123, and aspartate 124. L-citrulline is bound at residue asparagine 123. Residues arginine 127, serine 175, glutamate 259, and tyrosine 271 each coordinate L-citrulline.

This sequence belongs to the argininosuccinate synthase family. Type 1 subfamily. Homotetramer.

It is found in the cytoplasm. It catalyses the reaction L-citrulline + L-aspartate + ATP = 2-(N(omega)-L-arginino)succinate + AMP + diphosphate + H(+). Its pathway is amino-acid biosynthesis; L-arginine biosynthesis; L-arginine from L-ornithine and carbamoyl phosphate: step 2/3. In Corynebacterium diphtheriae (strain ATCC 700971 / NCTC 13129 / Biotype gravis), this protein is Argininosuccinate synthase.